A 149-amino-acid chain; its full sequence is Endoribonuclease YbeY (149 aa).

Zn(2+)-binding residues include H106, H110, and H116.

It belongs to the endoribonuclease YbeY family. Zn(2+) is required as a cofactor.

Its subcellular location is the cytoplasm. Single strand-specific metallo-endoribonuclease involved in late-stage 70S ribosome quality control and in maturation of the 3' terminus of the 16S rRNA. This Methylobacillus flagellatus (strain ATCC 51484 / DSM 6875 / VKM B-1610 / KT) protein is Endoribonuclease YbeY.